The chain runs to 248 residues: MLVIISSAKTLNFEKLALKTELTTSIFPNLTNQLLSTLQSYSENQLSEIMNISTKLAHINKERFKDFNNQESKAAIFAYAGDVFNNIHVEKLTNHELNFLQSHLLIISGLYGALKPLDAIKPYRLEMTTKLNEINLTSFWQDEITDYINKVLAKHENKYLLNLASQEYSSVVNPNKLKYQLVNIHFKENRDGKLSTIGINAKKARGAMVNVIANNLIDSPELLKNFPYLGYEFSPKHSSDSELVFIKE.

This sequence belongs to the UPF0246 family.

The chain is UPF0246 protein RF_0769 from Rickettsia felis (strain ATCC VR-1525 / URRWXCal2) (Rickettsia azadi).